Consider the following 162-residue polypeptide: Caveolin-2 (162 aa).

Topologically, residues 1–86 (MGLETEKADV…FEISKYVIYK (86 aa)) are cytoplasmic. Phosphotyrosine; by SRC is present on Tyr19. Ser20 and Ser23 each carry phosphoserine. The residue at position 27 (Tyr27) is a Phosphotyrosine; by SRC. At Ser36 the chain carries Phosphoserine. The segment at residues 87-107 (FLTVFLAIPLAFIAGILFATL) is an intramembrane region (helical). Residues 108–162 (SCLHIWILMPFVKTCLMVLPSVQTIWKSVTDVVIGPLCTSVGRIFSSVSMQLSHD) are Cytoplasmic-facing.

Belongs to the caveolin family. In terms of assembly, monomer or homodimer. Interacts with CAV1; the interaction forms a stable heterooligomeric complex that is required for targeting to lipid rafts and for caveolae formation. Tyrosine phosphorylated forms do not form heterooligomers with the Tyr-19-phosphorylated form existing as a monomer or dimer and the Tyr-27-form as a monomer only. Interacts (tyrosine phosphorylated form) with the SH2 domain-containing proteins, RASA1, NCK1 and SRC. Interacts (tyrosine phosphorylated form) with INSR; the interaction (Tyr-27-phosphorylated form) is increased on insulin stimulation. Interacts (Tyr-19-phosphorylated form) with MAPK1 (phosphorylated form); the interaction, promoted by insulin, leads to nuclear location and MAPK1 activation. Interacts with STAT3; the interaction is increased on insulin-induced tyrosine phosphorylation leading to STAT activation. In terms of processing, phosphorylated on serine and tyrosine residues. CAV1 promotes phosphorylation on Ser-23 which targets the complex to the plasma membrane, lipid rafts and caveolae. Phosphorylation on Ser-36 appears to modulate mitosis in endothelial cells. Phosphorylation on both Tyr-19 and Tyr-27 is required for insulin-induced 'Ser-727' phosphorylation of STAT3 and its activation. Phosphorylation on Tyr-19 is required for insulin-induced phosphorylation of MAPK1 and DNA binding of STAT3. Tyrosine phosphorylation is induced by both EGF and insulin. In the retina, mainly expressed in vessels, but also diffuse expression in the inner and outer plexiform layers and in the inner nuclear layer.

It localises to the nucleus. It is found in the cytoplasm. The protein localises to the golgi apparatus membrane. Its subcellular location is the cell membrane. The protein resides in the membrane. It localises to the caveola. In terms of biological role, may act as a scaffolding protein within caveolar membranes. Interacts directly with G-protein alpha subunits and can functionally regulate their activity. Acts as an accessory protein in conjunction with CAV1 in targeting to lipid rafts and driving caveolae formation. The Ser-36 phosphorylated form has a role in modulating mitosis in endothelial cells. Positive regulator of cellular mitogenesis of the MAPK signaling pathway. Required for the insulin-stimulated nuclear translocation and activation of MAPK1 and STAT3, and the subsequent regulation of cell cycle progression. This Rattus norvegicus (Rat) protein is Caveolin-2 (Cav2).